Consider the following 20-residue polypeptide: Calreticulin (20 aa).

The protein belongs to the calreticulin family. Glycosylated.

It localises to the endoplasmic reticulum lumen. Its function is as follows. Molecular calcium-binding chaperone promoting folding, oligomeric assembly and quality control in the ER via the calreticulin/calnexin cycle. This lectin may interact transiently with almost all of the monoglucosylated glycoproteins that are synthesized in the ER. This Spinacia oleracea (Spinach) protein is Calreticulin.